The following is a 369-amino-acid chain: Muscleblind-like protein 1 (369 aa).

4 consecutive C3H1-type zinc fingers follow at residues 13–41 (WLTL…HPSK), 47–73 (NGRV…HPPP), 178–206 (TDRL…HPAD), and 214–240 (DNTV…HPPA).

The protein belongs to the muscleblind family.

The protein localises to the nucleus. The protein resides in the cytoplasm. It localises to the cytoplasmic granule. Involved in pre-mRNA alternative splicing regulation. Binds to CUG triplet repeat in RNA. In Gallus gallus (Chicken), this protein is Muscleblind-like protein 1 (MBNL1).